Consider the following 171-residue polypeptide: uncharacterized protein (171 aa).

Disordered regions lie at residues 27 to 53 and 82 to 108; these read DCPGAGNNNREPSISTRGRTSSSKMVL and GHLEGHPPRVSQESAPAGHTGISPSSS. The segment covering 32 to 50 has biased composition (polar residues); sequence GNNNREPSISTRGRTSSSK.

This is an uncharacterized protein from Homo sapiens (Human).